A 364-amino-acid polypeptide reads, in one-letter code: RNA-binding protein ZC3H11 (364 aa).

The C3H1-type zinc-finger motif lies at 64-92 (RYKTKLCKNFVQYGTCPYDIRCMFAHGEE). The MKT1-binding motif motif lies at 194-199 (VRHNPY). The interval 340 to 364 (EQSQSHLKREGNEGRGEGLHMFLSL) is disordered. Residues 346–357 (LKREGNEGRGEG) are compositionally biased toward basic and acidic residues.

In terms of assembly, interacts (via MKT1-binding motif) with MKT1. Interacts with PBP1 (via C-terminus); the interaction is direct. Post-translationally, phosphorylated at the N-terminus. CK1.2-dependent phosphorylation may lead to proteasome-dependent degradation of ZC3H11 in absence of stress.

The protein localises to the cytoplasm. RNA-binding protein involved in regulation of mRNA stability. Binds AU-rich regions in the 3'-UTR of mRNAs and promotes their stabilization by recruiting a MKT1-containing complex. Stabilizes chaperone mRNAs during stress that causes an accumulation of misfolded or unfolded proteins in the cytoplasm. In Trypanosoma brucei brucei (strain 927/4 GUTat10.1), this protein is RNA-binding protein ZC3H11.